The following is a 334-amino-acid chain: Proline-serine-threonine phosphatase-interacting protein 2 (334 aa).

The F-BAR domain occupies 4 to 264 (SLFKGNFWSA…SLEMCSIQRD (261 aa)). A coiled-coil region spans residues 66 to 166 (GQSEINTLKR…AVSRSANLVN (101 aa)). Positions 295–322 (VPAGKATGPNLARRGPLPIPKSSPDDPN) are disordered. Phosphotyrosine is present on residues Tyr323 and Tyr329.

Phosphorylated on tyrosine.

The protein localises to the cytoplasm. It localises to the membrane. In terms of biological role, binds to F-actin. May be involved in regulation of the actin cytoskeleton. This Homo sapiens (Human) protein is Proline-serine-threonine phosphatase-interacting protein 2 (PSTPIP2).